Consider the following 256-residue polypeptide: MTEWQAVVLGIVEGISEFLPISSTGHLILTAHILGIKHTDFVKSFEISIQLGSILAVVVLYFNRLIRDYEIWKRIIAAFIPTGIIGFLLYKLIKGFLIGNDLVVVVSLILGGIILIFADTYCEKFCYLGDVRELPLRKAFMIGVFQSIAVIPGVSRSGSTIIGGMLMGLNRKVAAEFSFLLAIPTMFAATTYDLIKSGGSFNAQEWNILIIGFITSFITALIVVKWFLNFLKSHSLKIFGFYRILIGLVYAAFFLF.

Helical transmembrane passes span 8–28, 41–61, 75–95, 96–116, 175–195, 208–228, and 236–256; these read VLGI…GHLI, FVKS…VVLY, IIAA…LIKG, FLIG…IILI, AEFS…YDLI, ILII…KWFL, and LKIF…FFLF.

The protein belongs to the UppP family.

Its subcellular location is the cell inner membrane. It carries out the reaction di-trans,octa-cis-undecaprenyl diphosphate + H2O = di-trans,octa-cis-undecaprenyl phosphate + phosphate + H(+). Functionally, catalyzes the dephosphorylation of undecaprenyl diphosphate (UPP). Confers resistance to bacitracin. This Aquifex aeolicus (strain VF5) protein is Undecaprenyl-diphosphatase.